The following is a 370-amino-acid chain: Peptide chain release factor 1 (370 aa).

Residue Q231 is modified to N5-methylglutamine. Positions 284 to 293 are enriched in basic and acidic residues; it reads AREERERETR. A disordered region spans residues 284–303; the sequence is AREERERETRAAQVGTGERS.

It belongs to the prokaryotic/mitochondrial release factor family. In terms of processing, methylated by PrmC. Methylation increases the termination efficiency of RF1.

It is found in the cytoplasm. Functionally, peptide chain release factor 1 directs the termination of translation in response to the peptide chain termination codons UAG and UAA. The sequence is that of Peptide chain release factor 1 from Deinococcus geothermalis (strain DSM 11300 / CIP 105573 / AG-3a).